We begin with the raw amino-acid sequence, 332 residues long: 6-phosphogluconolactonase (332 aa).

Belongs to the cycloisomerase 2 family.

The catalysed reaction is 6-phospho-D-glucono-1,5-lactone + H2O = 6-phospho-D-gluconate + H(+). It participates in carbohydrate degradation; pentose phosphate pathway; D-ribulose 5-phosphate from D-glucose 6-phosphate (oxidative stage): step 2/3. Its function is as follows. Catalyzes the hydrolysis of 6-phosphogluconolactone to 6-phosphogluconate. This chain is 6-phosphogluconolactonase, found in Pectobacterium atrosepticum (strain SCRI 1043 / ATCC BAA-672) (Erwinia carotovora subsp. atroseptica).